The sequence spans 416 residues: UDP-N-acetylmuramoylalanine--D-glutamate ligase (416 aa).

ATP is bound at residue 108 to 114 (GTTGKTT).

The protein belongs to the MurCDEF family.

The protein resides in the cytoplasm. The enzyme catalyses UDP-N-acetyl-alpha-D-muramoyl-L-alanine + D-glutamate + ATP = UDP-N-acetyl-alpha-D-muramoyl-L-alanyl-D-glutamate + ADP + phosphate + H(+). The protein operates within cell wall biogenesis; peptidoglycan biosynthesis. Cell wall formation. Catalyzes the addition of glutamate to the nucleotide precursor UDP-N-acetylmuramoyl-L-alanine (UMA). The protein is UDP-N-acetylmuramoylalanine--D-glutamate ligase of Chlamydia trachomatis serovar A (strain ATCC VR-571B / DSM 19440 / HAR-13).